The primary structure comprises 146 residues: Hemoglobin subunit beta (146 aa).

Positions 2–146 constitute a Globin domain; that stretch reads HWTAEEKQLI…VAHALARKYH (145 aa). 2 residues coordinate heme b: histidine 63 and histidine 92.

Belongs to the globin family. In terms of assembly, heterotetramer of two alpha chains and two beta chains. As to expression, red blood cells.

Functionally, involved in oxygen transport from the lung to the various peripheral tissues. The protein is Hemoglobin subunit beta (HBB) of Chloephaga melanoptera (Andean goose).